The primary structure comprises 471 residues: Cysteine--tRNA ligase (471 aa).

Zn(2+) is bound at residue Cys-29. The 'HIGH' region motif lies at 31–41; sequence PTVYDYFHIGN. Zn(2+) contacts are provided by Cys-212, His-237, and Glu-241. The short motif at 269–273 is the 'KMSKS' region element; sequence KMSKS. An ATP-binding site is contributed by Lys-272.

This sequence belongs to the class-I aminoacyl-tRNA synthetase family. In terms of assembly, monomer. Requires Zn(2+) as cofactor.

Its subcellular location is the cytoplasm. It carries out the reaction tRNA(Cys) + L-cysteine + ATP = L-cysteinyl-tRNA(Cys) + AMP + diphosphate. This Symbiobacterium thermophilum (strain DSM 24528 / JCM 14929 / IAM 14863 / T) protein is Cysteine--tRNA ligase.